The sequence spans 426 residues: Serine--tRNA ligase (426 aa).

229 to 231 is an L-serine binding site; that stretch reads TAE. ATP is bound by residues 260–262 and Val-276; that span reads RKE. L-serine is bound at residue Glu-283. 349-352 contacts ATP; sequence EVTS. Residue Thr-384 participates in L-serine binding.

Belongs to the class-II aminoacyl-tRNA synthetase family. Type-1 seryl-tRNA synthetase subfamily. As to quaternary structure, homodimer. The tRNA molecule binds across the dimer.

The protein resides in the cytoplasm. The enzyme catalyses tRNA(Ser) + L-serine + ATP = L-seryl-tRNA(Ser) + AMP + diphosphate + H(+). The catalysed reaction is tRNA(Sec) + L-serine + ATP = L-seryl-tRNA(Sec) + AMP + diphosphate + H(+). It participates in aminoacyl-tRNA biosynthesis; selenocysteinyl-tRNA(Sec) biosynthesis; L-seryl-tRNA(Sec) from L-serine and tRNA(Sec): step 1/1. Its function is as follows. Catalyzes the attachment of serine to tRNA(Ser). Is also able to aminoacylate tRNA(Sec) with serine, to form the misacylated tRNA L-seryl-tRNA(Sec), which will be further converted into selenocysteinyl-tRNA(Sec). This Treponema pallidum (strain Nichols) protein is Serine--tRNA ligase.